A 178-amino-acid polypeptide reads, in one-letter code: Large ribosomal subunit protein uL6 (178 aa).

The protein belongs to the universal ribosomal protein uL6 family. Part of the 50S ribosomal subunit.

Its function is as follows. This protein binds to the 23S rRNA, and is important in its secondary structure. It is located near the subunit interface in the base of the L7/L12 stalk, and near the tRNA binding site of the peptidyltransferase center. In Listeria monocytogenes serotype 4a (strain HCC23), this protein is Large ribosomal subunit protein uL6.